Consider the following 2512-residue polypeptide: MDMKLNDIENENFINQMKGVAIVGIGFRIPSGNSENSISSPDDLFNNLKNGFDGVSSTSERWSDNYHKLGEISSPNAGLLPLNEWKSFDPLFFGINPSDAHHIDPQQRLLLKCTWEALEDASIDPISIRGTNTSVFIGSSTIDYLHANKHPDLILKNAIGFSPSTLSNRISYCFDIHGPSLSIDTACSSSMNAVTQGYHSILNGTSNMSIVGGVNFVIDVETIKGFSYLNMLSKTHGKCKAFDESGDGFTRGECAGVVVLKKLDDAIRDGNRIYCIINGISSNIDGNGIADKANFYSPSKQSQFNNINLAFKSTNGKISVNDIQYIEAHGTGTKTGDPIETEAISMAFKNRDKSTPILIGSIKSNIGHCEAGSGVVSLIKCCLMFKYQCFLPNIHFKNPNPLIKFNEWNLKVVTSPIPFNRNNEKSVSMMINNFGVTGSNCCLLISEFKKQDYESYENNIGSINKNILVPFSANSPKSLDQYQSKIKNIINNQFNFIDFANNQIYSKSNYLYQRSVVIANNSNDLVNKILNKKHIQTKNPIISNMSFKGKNPITIFVFSGQGSQYPKMALELYNNEVIFKKSIDLIDSKLSKYYGYSVLEKLRSIGDDDTTSIHDPTIAQPAMCMFSVSLFELYKHWGVNPSFILGHSLGEIPTSYCSGMIDLDTFCYTVYQRSIAQTKTHGNGRMLSINISDEEFKSMYSQKYPQIEIACYNSPQSIVVAGNESILNEISKELKEKEIFTAMLGSLSSFHTSSQQCTKDSILQLNIESKKSKVPTFSTVTTNLFNESDPFNSQYVYDNIINPVKFTQTISNIYKHIESNQLDNDIVFIEIAPHPTLSFYIKQMVPSSLNESVSVYSALHKKKNDVEEFQQTISNLYCQNGYNINFKCQFNNKKSNQKINLPLYQWDDELYFAQTQVLEQHRKEGPPIDHLGLSNSYYSPFKNSYRTFIDIKNKPFQYLKGHMVKGKYYFPGCGYIDNIIQLYKNQDIFISFIEFKTPLILIEGINQCLQTNIQQTGKSEYRAQFHFKDQKSNEWIQSSNANFQLLDHTIEMPPKYNIEEIIKNKCTLARLTKNEIYTHIKSKTGLNYTAMFQGATECYIGVDCTLSVVSIESQTNSFLNIPILDSVFHGNISLINDQCQIVFDKVHGLKYYSSNIPNDYKDKSVYVYAKLKSKTSDSYSASFTVLLSDGTVVYEIDEAFSKSLIPIKELLKIEYPNDELFSINLQPKDSPIPAPSTFKSLIYENDRFNAEPPMVENLFQYISTIFYKNIINRCPEINIDIIKSLSIDEIISNFSKISKHERLFKYVFETIKENGILNSLEEKDDTYFVFNEVLIKSSRVISKLLFPLENDNDNEDTPQLLFQNGLMDKVYKCRYLKNKNQMIAHIIKHSIKEIINNNIIIRILEFGGGTASLSVEVIEEIVTLLQENPNYQVEIEYTWSDISPAFIVDTKNKINKIIKGAGITNGLNVIYHPLTIDESLVELQSIKPSYYDFVIMSNVLHVVKDIKQAVEQMYQLLIPNGQLLFVEPPYKSIICDSLFGSFEQWWAFTDTDIRKDHCCLSQDGWYKLLKWSNFESIEMSTESKFMGSVIQAQKPSFTSLINQQPKYDNIIIFGNNCPNFIDNIKPFSNFNEFIQIETIQEFDQLINKSTITNDSIIYFIKSINQLSLDNYKQATLEYIEINQKLLQINSLCKHVLIVNDSRKTNYLASSIVGAARYFDEFQQLKLHTLDFDYDSTQNYLISKNNKMVQFINNLIDSKTNVHKEMIIINNKVYYEIVQKEKNLKLKYNSESFEQQDNLMCSLSPNLEYQLQSKQIKLRDNQVEVKTIATGINNKDYLVYSGLEGSVNSNTPQFGYEFSGIITRVGNNVKDYKVGDNVFGLSNSCTSSNIIVNHERIQIKPSNISHIEAASIPIDYLTSFMSLFNVGCLNIEDNESILIHLGSDSFGLSTFEILKWKGFKSNLFVTVNSDEIKQYLLNNYGDLITAIYSNTDKGYVSQIKNKLIEQGSNDNGVDLILNTLPSDFMDSNFQLLAINGRIIDLSNDHLNQSEYMKNVNFTLNRGYHNFDLMSQRNSRINRSLLTISKAIENGELKLIPIKEFSNSDINDAIEFIIEENRIDKIVVSHDHEVYQELYAKFSNENDFSILKSNYQINSNNLGKNILITGQSGIILEILKWIIKYSNINTIENVIILSRSSLKWELELLINQTKLSNNNIKFHFKSVDVGDSEQVDNAINEILNENQEIINIHSIFHFAFTQIACKVQEINMKHLDISHGAKTMGAINLHNQSIKRNWKLINFVISSSIASLVGSTDQCSYVCANALLDSFSKYRVSLGLPSTSINLGAIESTGFVSKNESISVFLDGSGIIPTPINQVLGLLDLQIQNPGKFTNSMVAKFNPLNFSNNEQINLLLKMDYIFNLHSNGYTKVKESAGSKNVDELFIKKISDLFSIDESKINKDIRLIDYGADSLVIVQLKNWVDQEIGFNLITIQQLQNNTINVSIKIILNFLKKINK.

Positions 17 to 447 (MKGVAIVGIG…GSNCCLLISE (431 aa)) constitute a Ketosynthase family 3 (KS3) domain. Residues C187, H329, and H368 each act as for beta-ketoacyl synthase activity in the active site. The segment at 638–671 (GVNPSFILGHSLGEIPTSYCSGMIDLDTFCYTVY) is acyl/malonyl transferase. S648 acts as the For acyl/malonyl transferase activity in catalysis. An N-terminal hotdog fold region spans residues 928–1050 (IDHLGLSNSY…ANFQLLDHTI (123 aa)). A PKS/mFAS DH domain is found at 928–1210 (IDHLGLSNSY…SKSLIPIKEL (283 aa)). Residue H962 is the Proton acceptor; for dehydratase activity of the active site. Residues 1067–1210 (TLARLTKNEI…SKSLIPIKEL (144 aa)) form a C-terminal hotdog fold region. The active-site Proton donor; for dehydratase activity is D1125. The region spanning 2430–2507 (AGSKNVDELF…VSIKIILNFL (78 aa)) is the Carrier domain. Position 2467 is an O-(pantetheine 4'-phosphoryl)serine (S2467).

Pantetheine 4'-phosphate is required as a cofactor.

Probable polyketide synthase. The polypeptide is Probable polyketide synthase 5 (pks5) (Dictyostelium discoideum (Social amoeba)).